The primary structure comprises 132 residues: NADH-quinone oxidoreductase subunit A 2 (132 aa).

3 helical membrane-spanning segments follow: residues 10-30 (WALLAYLFGALALCLLMLGLG), 66-86 (LVAMLFVIFGIEMPFLYLWAV), and 93-113 (WAGFVEATLFVSLLLVGLFYL).

The protein belongs to the complex I subunit 3 family. In terms of assembly, NDH-1 is composed of 13 different subunits. Subunits NuoA, H, J, K, L, M, N constitute the membrane sector of the complex.

The protein resides in the cell inner membrane. The enzyme catalyses a quinone + NADH + 5 H(+)(in) = a quinol + NAD(+) + 4 H(+)(out). NDH-1 shuttles electrons from NADH, via FMN and iron-sulfur (Fe-S) centers, to quinones in the respiratory chain. The immediate electron acceptor for the enzyme in this species is believed to be ubiquinone. Couples the redox reaction to proton translocation (for every two electrons transferred, four hydrogen ions are translocated across the cytoplasmic membrane), and thus conserves the redox energy in a proton gradient. This is NADH-quinone oxidoreductase subunit A 2 from Pseudomonas aeruginosa (strain UCBPP-PA14).